We begin with the raw amino-acid sequence, 371 residues long: Alginate lyase (371 aa).

The signal sequence occupies residues 1–28 (MRRPMTLFKRISSPALLALALFGGAAHA). Substrate is bound by residues 67-68 (SK), 140-141 (HT), and Tyr258.

This sequence belongs to the polysaccharide lyase 5 family.

The protein localises to the periplasm. It catalyses the reaction Eliminative cleavage of alginate to give oligosaccharides with 4-deoxy-alpha-L-erythro-hex-4-enuronosyl groups at their non-reducing ends and beta-D-mannuronate at their reducing end.. Catalyzes the depolymerization of alginate by cleaving the beta-1,4 glycosidic bond between two adjacent sugar residues via a beta-elimination mechanism. May serve to degrade mislocalized alginate that is trapped in the periplasmic space. The polypeptide is Alginate lyase (Pseudomonas putida (strain ATCC 47054 / DSM 6125 / CFBP 8728 / NCIMB 11950 / KT2440)).